The sequence spans 240 residues: Uridylate kinase (240 aa).

12 to 15 (KLSG) provides a ligand contact to ATP. Residues 20–25 (GDQGYG) are involved in allosteric activation by GTP. Glycine 54 serves as a coordination point for UMP. ATP-binding residues include glycine 55 and arginine 59. UMP is bound by residues aspartate 74 and 135-142 (TGNPYFST). ATP-binding residues include asparagine 163, tyrosine 169, and aspartate 172.

Belongs to the UMP kinase family. Homohexamer.

It localises to the cytoplasm. It catalyses the reaction UMP + ATP = UDP + ADP. It participates in pyrimidine metabolism; CTP biosynthesis via de novo pathway; UDP from UMP (UMPK route): step 1/1. With respect to regulation, allosterically activated by GTP. Inhibited by UTP. Catalyzes the reversible phosphorylation of UMP to UDP. The chain is Uridylate kinase from Oceanobacillus iheyensis (strain DSM 14371 / CIP 107618 / JCM 11309 / KCTC 3954 / HTE831).